A 138-amino-acid chain; its full sequence is MATTILAFDFGTYSIGCAVGQSITKTAQSLTAFKSQDGIPNWQHIEKIIKEWQPDLLVVGLPLNMDGSEQPLTQRARKFANRLNGRFNLPVALQDERLTTTEAKSEIFSRGGYKALKKDKIDTISACLILESWFDNNP.

Belongs to the YqgF nuclease family.

The protein localises to the cytoplasm. Could be a nuclease involved in processing of the 5'-end of pre-16S rRNA. This Haemophilus ducreyi (strain 35000HP / ATCC 700724) protein is Putative pre-16S rRNA nuclease.